We begin with the raw amino-acid sequence, 300 residues long: Dihydroorotate dehydrogenase B (NAD(+)), catalytic subunit (300 aa).

Residues serine 20 and 44-45 each bind FMN; that span reads KG. Substrate-binding positions include lysine 44 and 68 to 72; that span reads NSVGL. Positions 98 and 124 each coordinate FMN. Asparagine 124 is a binding site for substrate. Cysteine 127 functions as the Nucleophile in the catalytic mechanism. FMN-binding residues include lysine 162 and isoleucine 188. 189 to 190 contributes to the substrate binding site; sequence NT. Residues glycine 214, 240–241, and 262–263 contribute to the FMN site; these read GG and GT.

It belongs to the dihydroorotate dehydrogenase family. Type 1 subfamily. Heterotetramer of 2 PyrK and 2 PyrD type B subunits. It depends on FMN as a cofactor.

It is found in the cytoplasm. The enzyme catalyses (S)-dihydroorotate + NAD(+) = orotate + NADH + H(+). It participates in pyrimidine metabolism; UMP biosynthesis via de novo pathway; orotate from (S)-dihydroorotate (NAD(+) route): step 1/1. Catalyzes the conversion of dihydroorotate to orotate with NAD(+) as electron acceptor. The polypeptide is Dihydroorotate dehydrogenase B (NAD(+)), catalytic subunit (pyrD) (Caldicellulosiruptor bescii (strain ATCC BAA-1888 / DSM 6725 / KCTC 15123 / Z-1320) (Anaerocellum thermophilum)).